Consider the following 85-residue polypeptide: uncharacterized protein (85 aa).

A run of 2 helical transmembrane segments spans residues 14-34 and 60-80; these read FLFG…RATI and IFVY…IYFL.

The protein resides in the cell membrane. This is an uncharacterized protein from Escherichia coli O157:H7.